A 197-amino-acid polypeptide reads, in one-letter code: dITP/XTP pyrophosphatase (197 aa).

A substrate-binding site is contributed by Ser10–Lys15. 2 residues coordinate Mg(2+): Glu41 and Asp70. The active-site Proton acceptor is Asp70. Substrate is bound by residues Ser71, Phe154–Asp157, Lys177, and His182–Arg183.

The protein belongs to the HAM1 NTPase family. Homodimer. It depends on Mg(2+) as a cofactor.

It catalyses the reaction XTP + H2O = XMP + diphosphate + H(+). It carries out the reaction dITP + H2O = dIMP + diphosphate + H(+). The catalysed reaction is ITP + H2O = IMP + diphosphate + H(+). In terms of biological role, pyrophosphatase that catalyzes the hydrolysis of nucleoside triphosphates to their monophosphate derivatives, with a high preference for the non-canonical purine nucleotides XTP (xanthosine triphosphate), dITP (deoxyinosine triphosphate) and ITP. Seems to function as a house-cleaning enzyme that removes non-canonical purine nucleotides from the nucleotide pool, thus preventing their incorporation into DNA/RNA and avoiding chromosomal lesions. In Pseudomonas syringae pv. tomato (strain ATCC BAA-871 / DC3000), this protein is dITP/XTP pyrophosphatase.